Consider the following 119-residue polypeptide: Large ribosomal subunit protein uL18 (119 aa).

The tract at residues 1–25 is disordered; the sequence is MITKIDKNKVRKKRHARVRSKISGT. Basic residues predominate over residues 9–20; that stretch reads KVRKKRHARVRS.

Belongs to the universal ribosomal protein uL18 family. As to quaternary structure, part of the 50S ribosomal subunit; part of the 5S rRNA/L5/L18/L25 subcomplex. Contacts the 5S and 23S rRNAs.

Its function is as follows. This is one of the proteins that bind and probably mediate the attachment of the 5S RNA into the large ribosomal subunit, where it forms part of the central protuberance. The protein is Large ribosomal subunit protein uL18 of Listeria monocytogenes serotype 4b (strain CLIP80459).